The primary structure comprises 85 residues: Large ribosomal subunit protein bL27 (85 aa).

The tract at residues 1-23 is disordered; it reads MAHKKGQGSTQNNRDSAGRRLGV.

This sequence belongs to the bacterial ribosomal protein bL27 family.

This Aliarcobacter butzleri (strain RM4018) (Arcobacter butzleri) protein is Large ribosomal subunit protein bL27.